We begin with the raw amino-acid sequence, 252 residues long: Triosephosphate isomerase (252 aa).

Position 9-11 (9-11 (NWK)) interacts with substrate. Catalysis depends on H96, which acts as the Electrophile. The active-site Proton acceptor is E168. Residues G174, S214, and 235 to 236 (GG) contribute to the substrate site.

Belongs to the triosephosphate isomerase family. In terms of assembly, homodimer.

It localises to the cytoplasm. The enzyme catalyses D-glyceraldehyde 3-phosphate = dihydroxyacetone phosphate. The protein operates within carbohydrate biosynthesis; gluconeogenesis. It participates in carbohydrate degradation; glycolysis; D-glyceraldehyde 3-phosphate from glycerone phosphate: step 1/1. Functionally, involved in the gluconeogenesis. Catalyzes stereospecifically the conversion of dihydroxyacetone phosphate (DHAP) to D-glyceraldehyde-3-phosphate (G3P). In Chloroherpeton thalassium (strain ATCC 35110 / GB-78), this protein is Triosephosphate isomerase.